The sequence spans 667 residues: E3 ubiquitin-protein ligase Midline-1 (667 aa).

An RING-type zinc finger spans residues 10-60 (CPICLELLEDPLLLPCAHSLCFNCAHRILVSHCATNEPVESINAFQCPTCR). A phosphoserine mark is found at Ser-92 and Ser-96. 2 consecutive B box-type zinc fingers follow at residues 116–165 (KVLC…IEPI) and 172–212 (GLMC…VAAL). 12 residues coordinate Zn(2+): Cys-119, Cys-122, Cys-134, Cys-137, Cys-142, Cys-145, His-150, His-159, Cys-175, His-178, Cys-198, and His-204. Positions 205 to 264 (RDHQVAALSERYDKLKQNLESNLTNLIKRNTELETLLAKLIQTCQHVEVNASRQEAKLTE) form a coiled coil. The COS domain occupies 320 to 379 (LKENDHARFLQTAKNITERVSMATASSQVLIPEINLNDTFDTFALDFSREKKLLECLDYL). The 104-residue stretch at 381–484 (APNPPTIREE…EPGKLKTNSQ (104 aa)) folds into the Fibronectin type-III domain. The span at 471–485 (SRSSEPGKLKTNSQP) shows a compositional bias: polar residues. Residues 471–524 (SRSSEPGKLKTNSQPFKLDPKSAHRKLKVSHDNLTVERDESSSKKSHTPERFTS) form a disordered region. The B30.2/SPRY domain occupies 482 to 659 (NSQPFKLDPK…IITGLPIPDH (178 aa)). Over residues 499-520 (VSHDNLTVERDESSSKKSHTPE) the composition is skewed to basic and acidic residues. Ser-511 carries the phosphoserine modification.

The protein belongs to the TRIM/RBCC family. In terms of assembly, homodimer or heterodimer with MID2. Interacts with IGBP1.

Its subcellular location is the cytoplasm. It localises to the cytoskeleton. The catalysed reaction is S-ubiquitinyl-[E2 ubiquitin-conjugating enzyme]-L-cysteine + [acceptor protein]-L-lysine = [E2 ubiquitin-conjugating enzyme]-L-cysteine + N(6)-ubiquitinyl-[acceptor protein]-L-lysine.. In terms of biological role, has E3 ubiquitin ligase activity towards IGBP1, promoting its monoubiquitination, which results in deprotection of the catalytic subunit of protein phosphatase PP2A, and its subsequent degradation by polyubiquitination. The protein is E3 ubiquitin-protein ligase Midline-1 (Mid1) of Mus spretus (Western Mediterranean mouse).